The primary structure comprises 250 residues: Probable aquaporin TIP-type (250 aa).

The next 2 membrane-spanning stretches (helical) occupy residues 20–42 (AYVA…AIAY) and 55–77 (GLVA…AANV). Positions 83–85 (NPA) match the NPA 1 motif. A run of 3 helical transmembrane segments spans residues 97-119 (TILT…CLLL), 140-162 (IQGV…ATAA), and 172-194 (IAPI…FSGG). Residues 197 to 199 (NPA) carry the NPA 2 motif. The helical transmembrane segment at 215–237 (WIYWAGPLIGGALAGFIYGDVFI) threads the bilayer.

It belongs to the MIP/aquaporin (TC 1.A.8) family. TIP (TC 1.A.8.10) subfamily. Expressed in mature seeds and dark-grown seedlings.

The protein resides in the vacuole membrane. Channel protein in tonoplast. These proteins may allow the diffusion of amino acids and/or peptides from the vacuolar compartment to the cytoplasm. This Antirrhinum majus (Garden snapdragon) protein is Probable aquaporin TIP-type (DIP).